The primary structure comprises 108 residues: Mitochondrial import inner membrane translocase subunit tim-13 (108 aa).

A Twin CX3C motif motif is present at residues C45 to C68. Cystine bridges form between C45/C68 and C49/C64. The disordered stretch occupies residues E89–S108. A compositionally biased stretch (gly residues) spans G95–S108.

The protein belongs to the small Tim family. In terms of assembly, heterohexamer; composed of 3 copies of tim-8/ddp-1 and 3 copies of tin-13/tim-13, named soluble 70 kDa complex. Associates with the TIM22 complex, whose core is composed of tim-22.

The protein localises to the mitochondrion inner membrane. Mitochondrial intermembrane chaperone that participates in the import and insertion of some multi-pass transmembrane proteins into the mitochondrial inner membrane. Also required for the transfer of beta-barrel precursors from the TOM complex to the sorting and assembly machinery (SAM complex) of the outer membrane. Acts as a chaperone-like protein that protects the hydrophobic precursors from aggregation and guide them through the mitochondrial intermembrane space. The tim-8-tim-13 complex mediates the import of some proteins while the predominant tim-9/tin-9.1-tim-10/tin-10 70 kDa complex mediates the import of much more proteins. This is Mitochondrial import inner membrane translocase subunit tim-13 (tin-13) from Caenorhabditis elegans.